The following is a 245-amino-acid chain: Probable phosphatase KPK_3500 (245 aa).

9 residues coordinate Zn(2+): His7, His9, His15, His40, Glu73, His101, His131, Asp192, and His194.

This sequence belongs to the PHP family. As to quaternary structure, homotrimer. Zn(2+) is required as a cofactor.

The protein is Probable phosphatase KPK_3500 of Klebsiella pneumoniae (strain 342).